We begin with the raw amino-acid sequence, 118 residues long: T cell receptor gamma variable 4 (118 aa).

The N-terminal stretch at 1-17 (MQWALAVLLAFLSPASQ) is a signal peptide. The Ig-like domain occupies 18 to 118 (KSSNLEGRTK…GVYYCATWDG (101 aa)). Cys41 and Cys113 are oxidised to a cystine. Residue Asn106 is glycosylated (N-linked (GlcNAc...) asparagine).

In terms of assembly, gamma-delta TR is a heterodimer composed of a gamma and delta chain; disulfide-linked. The gamma-delta TR is associated with the transmembrane signaling CD3 coreceptor proteins following the stoichiometry: a single gamma-delta TR heterodimer associates with one CD3D-CD3E heterodimer, one CD3G-CD3E heterodimer and one CD247 homodimer forming a stable octameric structure. Upon activation, gamma-delta TR complex associates with FCER1G to initiate intracellular signaling.

Its subcellular location is the cell membrane. Functionally, v region of the variable domain of T cell receptor (TR) gamma chain that participates in the antigen recognition. Gamma-delta TRs recognize a variety of self and foreign non-peptide antigens frequently expressed at the epithelial boundaries between the host and external environment, including endogenous lipids presented by MH-like protein CD1D and phosphoantigens presented by butyrophilin-like molecule BTN3A1. Upon antigen recognition induces rapid, innate-like immune responses involved in pathogen clearance and tissue repair. Binding of gamma-delta TR complex to antigen triggers phosphorylation of immunoreceptor tyrosine-based activation motifs (ITAMs) in the CD3 chains by the LCK and FYN kinases, allowing the recruitment, phosphorylation, and activation of ZAP70 that facilitates phosphorylation of the scaffolding proteins LCP2 and LAT. This lead to the formation of a supramolecular signalosome that recruits the phospholipase PLCG1, resulting in calcium mobilization and ERK activation, ultimately leading to T cell expansion and differentiation into effector cells. Gamma-delta TRs are produced through somatic rearrangement of a limited repertoire of variable (V), diversity (D), and joining (J) genes. The potential diversity of gamma-delta TRs is conferred by the unique ability to rearrange (D) genes in tandem and to utilize all three reading frames. The combinatorial diversity is considerably increased by the sequence exonuclease trimming and random nucleotide (N) region additions which occur during the V-(D)-J rearrangements. The polypeptide is T cell receptor gamma variable 4 (Homo sapiens (Human)).